The primary structure comprises 399 residues: Phosphatidate cytidylyltransferase 5, chloroplastic (399 aa).

A chloroplast-targeting transit peptide spans 1–26 (MAPFVEVCRYKPLPLSLSSLCTCPCR). Helical transmembrane passes span 123 to 143 (VGGI…AAVL), 187 to 207 (FGHI…ALLL), 217 to 237 (LSST…WVKL), 266 to 286 (VGLV…TFAF), 309 to 329 (AFAG…SLSW), and 333 to 353 (LVST…GDLT).

It belongs to the CDS family. It depends on Mg(2+) as a cofactor.

The protein localises to the plastid. The protein resides in the chloroplast membrane. It carries out the reaction a 1,2-diacyl-sn-glycero-3-phosphate + CTP + H(+) = a CDP-1,2-diacyl-sn-glycerol + diphosphate. It participates in phospholipid metabolism; CDP-diacylglycerol biosynthesis; CDP-diacylglycerol from sn-glycerol 3-phosphate: step 3/3. Its activity is regulated as follows. Highest activities is obtained at about 30 mM CTP and 2 mM phosphatidic acid (PA). May be involved in the synthesis of minor phospholipids and in modulation of IP3-mediated signal transduction. Promotes the biosynthesis of plastidial phosphatidylglycerol (PG) which is required for structure and function of thylakoid membranes and, hence, for photoautotrophic growth. This chain is Phosphatidate cytidylyltransferase 5, chloroplastic, found in Arabidopsis thaliana (Mouse-ear cress).